A 253-amino-acid chain; its full sequence is Sec-independent protein translocase protein TatC (253 aa).

A run of 5 helical transmembrane segments spans residues 19–39 (ILII…LATP), 70–90 (FAFT…LWAF), 109–129 (IAFF…FPFL), 154–174 (FLFQ…VVMF), and 194–214 (FFVL…SHLM).

The protein belongs to the TatC family. Forms a complex with TatA.

Its subcellular location is the cell membrane. Part of the twin-arginine translocation (Tat) system that transports large folded proteins containing a characteristic twin-arginine motif in their signal peptide across membranes. The protein is Sec-independent protein translocase protein TatC of Halalkalibacterium halodurans (strain ATCC BAA-125 / DSM 18197 / FERM 7344 / JCM 9153 / C-125) (Bacillus halodurans).